A 234-amino-acid polypeptide reads, in one-letter code: Prolactin-6A1 (234 aa).

The first 33 residues, 1–33 (MVKSWLRMSKKMEAGTLLMLLMSNILLWENVAS), serve as a signal peptide directing secretion. Asn-61 carries N-linked (GlcNAc...) asparagine glycosylation. Cystine bridges form between Cys-93–Cys-209 and Cys-226–Cys-234.

Belongs to the somatotropin/prolactin family.

Its subcellular location is the secreted. In Rattus norvegicus (Rat), this protein is Prolactin-6A1 (Prl6a1).